A 173-amino-acid chain; its full sequence is Putative phosphoesterase GWCH70_0799 (173 aa).

Histidine 34 functions as the Proton donor in the catalytic mechanism. Short sequence motifs (HXTX) lie at residues 34 to 37 (HLTL) and 115 to 118 (HITI). The Proton acceptor role is filled by histidine 115.

It belongs to the 2H phosphoesterase superfamily. YjcG family.

This chain is Putative phosphoesterase GWCH70_0799, found in Geobacillus sp. (strain WCH70).